We begin with the raw amino-acid sequence, 1650 residues long: HEAT repeat-containing protein 1 homolog (1650 aa).

Residues glutamine 1183 to leucine 1210 form a disordered region. Residues leucine 1609–serine 1645 form an HEAT repeat.

The protein belongs to the HEATR1/UTP10 family.

It localises to the nucleus. The protein resides in the nucleolus. Its function is as follows. Involved in nucleolar processing of pre-18S ribosomal RNA. Involved in ribosome biosynthesis. This is HEAT repeat-containing protein 1 homolog (toe-1) from Caenorhabditis elegans.